A 618-amino-acid polypeptide reads, in one-letter code: 1-deoxy-D-xylulose-5-phosphate synthase (618 aa).

Thiamine diphosphate contacts are provided by residues His70 and 111–113 (GHS). Residue Asp142 participates in Mg(2+) binding. Thiamine diphosphate is bound by residues 143-144 (GS), Asn171, Tyr278, and Glu360. Position 171 (Asn171) interacts with Mg(2+).

The protein belongs to the transketolase family. DXPS subfamily. Homodimer. Requires Mg(2+) as cofactor. Thiamine diphosphate is required as a cofactor.

It catalyses the reaction D-glyceraldehyde 3-phosphate + pyruvate + H(+) = 1-deoxy-D-xylulose 5-phosphate + CO2. The protein operates within metabolic intermediate biosynthesis; 1-deoxy-D-xylulose 5-phosphate biosynthesis; 1-deoxy-D-xylulose 5-phosphate from D-glyceraldehyde 3-phosphate and pyruvate: step 1/1. Catalyzes the acyloin condensation reaction between C atoms 2 and 3 of pyruvate and glyceraldehyde 3-phosphate to yield 1-deoxy-D-xylulose-5-phosphate (DXP). The sequence is that of 1-deoxy-D-xylulose-5-phosphate synthase from Helicobacter pylori (strain G27).